The primary structure comprises 284 residues: uncharacterized protein (284 aa).

3 consecutive transmembrane segments (helical) span residues 174–194, 217–237, and 241–261; these read LFVL…YISI, MLIP…PGTA, and LIVL…SGSC.

The protein resides in the membrane. This is an uncharacterized protein from Saccharomyces cerevisiae (strain ATCC 204508 / S288c) (Baker's yeast).